We begin with the raw amino-acid sequence, 172 residues long: uncharacterized protein (172 aa).

2 disordered regions span residues 1-54 and 82-111; these read MPRR…GGSS and ITGG…SVPE. Residues 14–29 are compositionally biased toward low complexity; it reads AAPARSASTAAALPPR. The span at 30-47 shows a compositional bias: pro residues; sequence TMAPPPAPSRVQQAPPPT. Polar residues predominate over residues 89 to 109; sequence SGSNNAPADTSVPQSSYSNSV.

This is an uncharacterized protein from Schizosaccharomyces pombe (strain 972 / ATCC 24843) (Fission yeast).